A 208-amino-acid chain; its full sequence is Pyridoxine/pyridoxamine 5'-phosphate oxidase (208 aa).

FMN contacts are provided by residues 55-60 (RMVLLK), 70-71 (YT), Lys76, Lys77, and Gln99. Lys60 is a substrate binding site. Positions 117, 121, and 125 each coordinate substrate. Residues 134–135 (QS) and Trp179 contribute to the FMN site. 185–187 (RLH) is a binding site for substrate. Position 189 (Arg189) interacts with FMN.

It belongs to the pyridoxamine 5'-phosphate oxidase family. Homodimer. Requires FMN as cofactor.

The catalysed reaction is pyridoxamine 5'-phosphate + O2 + H2O = pyridoxal 5'-phosphate + H2O2 + NH4(+). The enzyme catalyses pyridoxine 5'-phosphate + O2 = pyridoxal 5'-phosphate + H2O2. It functions in the pathway cofactor metabolism; pyridoxal 5'-phosphate salvage; pyridoxal 5'-phosphate from pyridoxamine 5'-phosphate: step 1/1. The protein operates within cofactor metabolism; pyridoxal 5'-phosphate salvage; pyridoxal 5'-phosphate from pyridoxine 5'-phosphate: step 1/1. In terms of biological role, catalyzes the oxidation of either pyridoxine 5'-phosphate (PNP) or pyridoxamine 5'-phosphate (PMP) into pyridoxal 5'-phosphate (PLP). In Brucella ovis (strain ATCC 25840 / 63/290 / NCTC 10512), this protein is Pyridoxine/pyridoxamine 5'-phosphate oxidase.